The sequence spans 152 residues: Coiled-coil domain-containing protein 182 (152 aa).

Residues 46-109 (ADLEILQQKV…RLREEEDRGI (64 aa)) are a coiled coil.

This Mus musculus (Mouse) protein is Coiled-coil domain-containing protein 182 (Ccdc182).